We begin with the raw amino-acid sequence, 40 residues long: Serine proteinase-like BMK-CBP (40 aa).

One can recognise a Peptidase S1 domain in the interval isoleucine 1 to histidine 40. The Charge relay system role is filled by histidine 40.

It belongs to the peptidase S1 family. Expressed by the venom gland.

It localises to the secreted. Its function is as follows. Binds in a dose-dependent manner to the breast cancer cell line MCF-7. In Olivierus martensii (Manchurian scorpion), this protein is Serine proteinase-like BMK-CBP.